We begin with the raw amino-acid sequence, 94 residues long: MALLTDDQINAALAGLPGWTREGDSLRRAVTFDAFLDGIDAVRRIAEHAESVDHHPDIDIRWRTVTFVLSTHSEGGITDKDLALAETIDTQIGR.

Belongs to the pterin-4-alpha-carbinolamine dehydratase family.

It carries out the reaction (4aS,6R)-4a-hydroxy-L-erythro-5,6,7,8-tetrahydrobiopterin = (6R)-L-erythro-6,7-dihydrobiopterin + H2O. This chain is Putative pterin-4-alpha-carbinolamine dehydratase, found in Mycobacteroides abscessus (strain ATCC 19977 / DSM 44196 / CCUG 20993 / CIP 104536 / JCM 13569 / NCTC 13031 / TMC 1543 / L948) (Mycobacterium abscessus).